The chain runs to 881 residues: Disks large homolog 2 (881 aa).

2 disordered regions span residues 16-41 and 63-88; these read HRQQNRPPAVQGSQHQSHSPACMNPA and LSTTDSPHSYRYQDDDSPPPEHSFPR. 3 consecutive PDZ domains span residues 155-242, 250-337, and 424-505; these read EITL…RRRR, EIKL…GKPT, and KIVL…QYRP. The SH3 domain maps to 539–609; that stretch reads KRSLYVRALF…PSKRRVERKE (71 aa). In terms of domain architecture, Guanylate kinase-like spans 683–866; sequence ARPVIILGPM…IYNQCKMVIE (184 aa). Residues 709-729 form a disordered region; that stretch reads GSCVPPANSSDQEDTTRPKRD.

It belongs to the MAGUK family.

The protein resides in the cell membrane. The protein localises to the postsynaptic density. It is found in the synapse. Its subcellular location is the membrane. It localises to the cell projection. The protein resides in the axon. The protein localises to the perikaryon. May play a role in synapse assembly and function. The protein is Disks large homolog 2 (dlg2) of Danio rerio (Zebrafish).